Consider the following 288-residue polypeptide: Transmembrane protein 163 (288 aa).

Residues 1–11 are compositionally biased toward basic and acidic residues; that stretch reads MERAPGSERRS. Positions 1-64 are disordered; it reads MERAPGSERR…ESGQFSDGFE (64 aa). The Cytoplasmic segment spans residues 1–87; that stretch reads MERAPGSERR…HEAQNYRKKA (87 aa). Serine 11 bears the Phosphoserine mark. A compositionally biased stretch (pro residues) spans 12-24; it reads PPGPGVPRPPPRG. Over residues 25-42 the composition is skewed to low complexity; that stretch reads HAPSTAAPAPNPAPLSSS. Positions 41–71 are required for interaction with MCOLN1; sequence SSMQPDEERQPRISESGQFSDGFEDRGLLES. Phosphoserine occurs at positions 54, 56, and 60. Residues 88–108 traverse the membrane as a helical segment; that stretch reads LWVSWLSIIVTLALAVAAFTV. The Extracellular segment spans residues 109–115; it reads SVMRYSA. A helical membrane pass occupies residues 116–136; it reads SAFGFAFDAILDVLSSAIVLW. Topologically, residues 137-149 are cytoplasmic; sequence RYSNAAAVHSAHR. A helical membrane pass occupies residues 150–170; the sequence is EYIACVILGVIFLLSSICIVV. Topologically, residues 171-186 are extracellular; sequence KAIHDLSTRLLPEVDD. A helical membrane pass occupies residues 187–207; the sequence is FLFSVSILSGILCSVLAVLKF. Residues 208 to 216 are Cytoplasmic-facing; the sequence is MLGKVLTSR. The chain crosses the membrane as a helical span at residues 217–237; that stretch reads ALITDGFNSLVGGVMGFSILL. Over 238–254 the chain is Extracellular; sequence SAEVFKHNAAVWYLDGS. The helical transmembrane segment at 255-275 threads the bilayer; that stretch reads IGVLIGLTIFAYGVKLLIDMV. Residues 276 to 288 are Cytoplasmic-facing; that stretch reads PRVRQTRHYEMFE.

This sequence belongs to the TMEM163 family. As to quaternary structure, homodimer. Interacts with MCOLN1. Interacts with SLC30A1, SLC30A2, SLC30A3 and SLC30A4. As to expression, strongly expressed in brain. Also detected in lung, liver, kidney and spleen. Mainly expressed in the glutaminergic neuron subpopulations.

The protein localises to the cytoplasmic vesicle. Its subcellular location is the secretory vesicle. It localises to the synaptic vesicle membrane. It is found in the early endosome membrane. The protein resides in the late endosome membrane. The protein localises to the lysosome membrane. Its subcellular location is the cell membrane. The enzyme catalyses Zn(2+)(in) = Zn(2+)(out). Its function is as follows. Zinc ion transporter that mediates zinc efflux and plays a crucial role in intracellular zinc homeostasis. Binds the divalent cations Zn(2+), Ni(2+), and to a minor extent Cu(2+). Is a functional modulator of P2X purinoceptors, including P2RX1, P2RX3, P2RX4 and P2RX7. Plays a role in central nervous system development and is required for myelination, and survival and proliferation of oligodendrocytes. In Rattus norvegicus (Rat), this protein is Transmembrane protein 163 (Tmem163).